The chain runs to 197 residues: Probable nicotinate-nucleotide adenylyltransferase (197 aa).

This sequence belongs to the NadD family.

The catalysed reaction is nicotinate beta-D-ribonucleotide + ATP + H(+) = deamido-NAD(+) + diphosphate. The protein operates within cofactor biosynthesis; NAD(+) biosynthesis; deamido-NAD(+) from nicotinate D-ribonucleotide: step 1/1. Its function is as follows. Catalyzes the reversible adenylation of nicotinate mononucleotide (NaMN) to nicotinic acid adenine dinucleotide (NaAD). The protein is Probable nicotinate-nucleotide adenylyltransferase of Leptospira borgpetersenii serovar Hardjo-bovis (strain JB197).